The chain runs to 192 residues: Recombination protein RecR (192 aa).

A C4-type zinc finger spans residues 51-66; sequence CQTCFHLSADPECEIC. In terms of domain architecture, Toprim spans 74–168; that stretch reads GLICVVADSR…PVSRIAYGLP (95 aa).

The protein belongs to the RecR family.

In terms of biological role, may play a role in DNA repair. It seems to be involved in an RecBC-independent recombinational process of DNA repair. It may act with RecF and RecO. The polypeptide is Recombination protein RecR (Parasynechococcus marenigrum (strain WH8102)).